A 513-amino-acid polypeptide reads, in one-letter code: ATP synthase subunit alpha (513 aa).

169–176 (GDRQCGKT) lines the ATP pocket.

It belongs to the ATPase alpha/beta chains family. F-type ATPases have 2 components, CF(1) - the catalytic core - and CF(0) - the membrane proton channel. CF(1) has five subunits: alpha(3), beta(3), gamma(1), delta(1), epsilon(1). CF(0) has three main subunits: a(1), b(2) and c(9-12). The alpha and beta chains form an alternating ring which encloses part of the gamma chain. CF(1) is attached to CF(0) by a central stalk formed by the gamma and epsilon chains, while a peripheral stalk is formed by the delta and b chains.

It localises to the cell inner membrane. The enzyme catalyses ATP + H2O + 4 H(+)(in) = ADP + phosphate + 5 H(+)(out). Produces ATP from ADP in the presence of a proton gradient across the membrane. The alpha chain is a regulatory subunit. In Burkholderia mallei (strain NCTC 10229), this protein is ATP synthase subunit alpha.